Reading from the N-terminus, the 101-residue chain is UPF0473 protein LAF_0524 (101 aa).

The protein belongs to the UPF0473 family.

In Limosilactobacillus fermentum (strain NBRC 3956 / LMG 18251) (Lactobacillus fermentum), this protein is UPF0473 protein LAF_0524.